A 238-amino-acid chain; its full sequence is uncharacterized protein (238 aa).

This is an uncharacterized protein from Methanocaldococcus jannaschii (strain ATCC 43067 / DSM 2661 / JAL-1 / JCM 10045 / NBRC 100440) (Methanococcus jannaschii).